The primary structure comprises 167 residues: Leukotoxin-activating lysine-acyltransferase LktC serotype T3 (167 aa).

Active-site residues include H22 and D91.

The protein belongs to the RTX toxin acyltransferase family.

It localises to the cytoplasm. The enzyme catalyses a fatty acyl-[ACP] + L-lysyl-[protein] = N(6)-(fatty acyl)-L-lysyl-[protein] + holo-[ACP] + H(+). Its function is as follows. Involved in fatty acylation of the protoxin (LktA) at two internal lysine residues, thereby converting it to the active toxin. This is Leukotoxin-activating lysine-acyltransferase LktC serotype T3 (lktC) from Mannheimia haemolytica (Pasteurella haemolytica).